The following is a 338-amino-acid chain: NADPH dehydrogenase (338 aa).

Ser23 to Cys26 contributes to the FMN binding site. Tyr28 lines the substrate pocket. FMN is bound by residues Ala60 and Gln102. Substrate is bound at residue His163–His166. Residues Arg214 and Ala306 to Arg307 contribute to the FMN site.

It belongs to the NADH:flavin oxidoreductase/NADH oxidase family. NamA subfamily. As to quaternary structure, homotetramer. FMN is required as a cofactor.

It catalyses the reaction A + NADPH + H(+) = AH2 + NADP(+). Catalyzes the reduction of the double bond of an array of alpha,beta-unsaturated aldehydes and ketones. It also reduces the nitro group of nitroester and nitroaromatic compounds. It could have a role in detoxification processes. The protein is NADPH dehydrogenase of Halalkalibacterium halodurans (strain ATCC BAA-125 / DSM 18197 / FERM 7344 / JCM 9153 / C-125) (Bacillus halodurans).